A 521-amino-acid chain; its full sequence is U4/U6 small nuclear ribonucleoprotein Prp4 (521 aa).

An N6-acetyllysine modification is found at K26. WD repeat units follow at residues 229–268, 271–318, 321–360, 363–402, 405–444, 447–487, and 490–521; these read DDRP…LHTL, HNTN…VADI, HTVR…ILHQ, HSMG…IMFL, HLKE…VYTI, HQNL…LKTL, and HEGK…WMAE.

In terms of assembly, component of the precatalytic spliceosome (spliceosome B complex). Component of the U4/U6-U5 tri-snRNP complex, a building block of the precatalytic spliceosome (spliceosome B complex). The U4/U6-U5 tri-snRNP complex is composed of the U4, U6 and U5 snRNAs and at least PRPF3, PRPF4, PRPF6, PRPF8, PRPF31, SNRNP200, TXNL4A, SNRNP40, SNRPB, SNRPD1, SNRPD2, SNRPD3, SNRPE, SNRPF, SNRPG, DDX23, CD2BP2, PPIH, SNU13, EFTUD2, SART1 and USP39, plus LSM2, LSM3, LSM4, LSM5, LSM6, LSM7 and LSM8. Interacts directly with PRPF18, PPIH and PRPF3. Part of a heteromeric complex containing PPIH, PRPF3 and PRPF4 that is stable in the absence of RNA. Interacts with ERCC6.

It is found in the nucleus. It localises to the nucleus speckle. Plays a role in pre-mRNA splicing as component of the U4/U6-U5 tri-snRNP complex that is involved in spliceosome assembly, and as component of the precatalytic spliceosome (spliceosome B complex). This Bos taurus (Bovine) protein is U4/U6 small nuclear ribonucleoprotein Prp4 (PRPF4).